The primary structure comprises 215 residues: Probable transaldolase (215 aa).

Catalysis depends on K83, which acts as the Schiff-base intermediate with substrate.

It belongs to the transaldolase family. Type 3B subfamily.

The protein localises to the cytoplasm. It carries out the reaction D-sedoheptulose 7-phosphate + D-glyceraldehyde 3-phosphate = D-erythrose 4-phosphate + beta-D-fructose 6-phosphate. Its pathway is carbohydrate degradation; pentose phosphate pathway; D-glyceraldehyde 3-phosphate and beta-D-fructose 6-phosphate from D-ribose 5-phosphate and D-xylulose 5-phosphate (non-oxidative stage): step 2/3. Its function is as follows. Transaldolase is important for the balance of metabolites in the pentose-phosphate pathway. This chain is Probable transaldolase, found in Methanococcus maripaludis (strain C5 / ATCC BAA-1333).